Reading from the N-terminus, the 505-residue chain is Ion-translocating oxidoreductase complex subunit C (505 aa).

2 4Fe-4S ferredoxin-type domains span residues 381 to 410 (ELNNFEEKNCIRCAACSYSCPMNLLPEQLY) and 420 to 449 (KTQIYNIQDCIECGICEQVCPSDIPLMSYY). The [4Fe-4S] cluster site is built by Cys390, Cys393, Cys396, Cys400, Cys429, Cys432, Cys435, and Cys439.

It belongs to the 4Fe4S bacterial-type ferredoxin family. RnfC subfamily. In terms of assembly, the complex is composed of six subunits: RnfA, RnfB, RnfC, RnfD, RnfE and RnfG. [4Fe-4S] cluster serves as cofactor.

It is found in the cell inner membrane. Part of a membrane-bound complex that couples electron transfer with translocation of ions across the membrane. The sequence is that of Ion-translocating oxidoreductase complex subunit C from Buchnera aphidicola subsp. Baizongia pistaciae (strain Bp).